A 395-amino-acid chain; its full sequence is Na(+)/H(+) antiporter NhaA 1 (395 aa).

The next 11 membrane-spanning stretches (helical) occupy residues 11–31, 63–83, 99–119, 129–149, 158–178, 183–203, 223–243, 258–278, 282–302, 332–352, and 364–384; these read FFSS…LAMV, MLLW…GLEV, VFPV…YLAF, GWAI…ALLG, IFLM…IALF, LSML…ALNL, VLKS…MIPL, VLHP…NAGV, GVTL…GLFI, IMAV…IATL, and WAKL…YLIL.

The protein belongs to the NhaA Na(+)/H(+) (TC 2.A.33) antiporter family.

It localises to the cell inner membrane. The catalysed reaction is Na(+)(in) + 2 H(+)(out) = Na(+)(out) + 2 H(+)(in). Its function is as follows. Na(+)/H(+) antiporter that extrudes sodium in exchange for external protons. This Klebsiella pneumoniae subsp. pneumoniae (strain ATCC 700721 / MGH 78578) protein is Na(+)/H(+) antiporter NhaA 1.